The following is a 366-amino-acid chain: Uroporphyrinogen decarboxylase (366 aa).

Residues 28-32 (RQAGR), Asp78, Tyr160, Thr215, and His333 each bind substrate.

The protein belongs to the uroporphyrinogen decarboxylase family. In terms of assembly, homodimer.

It localises to the cytoplasm. The catalysed reaction is uroporphyrinogen III + 4 H(+) = coproporphyrinogen III + 4 CO2. Its pathway is porphyrin-containing compound metabolism; protoporphyrin-IX biosynthesis; coproporphyrinogen-III from 5-aminolevulinate: step 4/4. Catalyzes the decarboxylation of four acetate groups of uroporphyrinogen-III to yield coproporphyrinogen-III. The protein is Uroporphyrinogen decarboxylase of Paraburkholderia xenovorans (strain LB400).